Consider the following 463-residue polypeptide: Thiamine-repressible acid phosphatase pho4 (463 aa).

A signal peptide spans 1–18 (MKLSGISLWLLAASIVHA). The Nucleophile role is filled by H69. N-linked (GlcNAc...) asparagine glycosylation is found at N98, N104, N186, N221, N251, and N328. The active-site Proton donor is the D341. 3 N-linked (GlcNAc...) asparagine glycosylation sites follow: N433, N439, and N458.

This sequence belongs to the histidine acid phosphatase family.

It is found in the secreted. Its subcellular location is the cell wall. It catalyses the reaction a phosphate monoester + H2O = an alcohol + phosphate. Functionally, may dephosphorylate thiamine phosphates. The polypeptide is Thiamine-repressible acid phosphatase pho4 (pho4) (Schizosaccharomyces pombe (strain 972 / ATCC 24843) (Fission yeast)).